The following is a 222-amino-acid chain: UPF0758 protein YicR (222 aa).

The MPN domain maps to 100-222; that stretch reads PLLSPEMTRE…YVSFAERGWI (123 aa). His-171, His-173, and Asp-184 together coordinate Zn(2+). Positions 171–184 match the JAMM motif motif; that stretch reads HNHPSGCAEPSKAD.

It belongs to the UPF0758 family. YicR subfamily.

This chain is UPF0758 protein YicR, found in Escherichia coli O9:H4 (strain HS).